The following is a 310-amino-acid chain: Leucine carboxyl methyltransferase 1 (310 aa).

Residues R50, G75, D100, D145–I146, and E169 contribute to the S-adenosyl-L-methionine site.

Belongs to the methyltransferase superfamily. LCMT family.

The enzyme catalyses [phosphatase 2A protein]-C-terminal L-leucine + S-adenosyl-L-methionine = [phosphatase 2A protein]-C-terminal L-leucine methyl ester + S-adenosyl-L-homocysteine. Functionally, methylates the carboxyl group of the C-terminal leucine residue of protein phosphatase 2A catalytic subunits to form alpha-leucine ester residues. The polypeptide is Leucine carboxyl methyltransferase 1 (ppm1) (Schizosaccharomyces pombe (strain 972 / ATCC 24843) (Fission yeast)).